A 363-amino-acid chain; its full sequence is Outer membrane protein P2 (363 aa).

A signal peptide spans 1–20 (MKKTLAALIVGAFAASAANA).

This sequence belongs to the Gram-negative porin family. In terms of assembly, homotrimer.

It is found in the cell outer membrane. In terms of biological role, forms pores that allow passive diffusion of small molecules across the outer membrane. The sequence is that of Outer membrane protein P2 (ompP2) from Haemophilus influenzae.